A 294-amino-acid polypeptide reads, in one-letter code: Pyridoxal 5'-phosphate synthase subunit PdxS (294 aa).

Aspartate 24 is a D-ribose 5-phosphate binding site. Lysine 81 acts as the Schiff-base intermediate with D-ribose 5-phosphate in catalysis. Glycine 153 is a D-ribose 5-phosphate binding site. A D-glyceraldehyde 3-phosphate-binding site is contributed by arginine 165. Residues glycine 214 and 235-236 (GS) contribute to the D-ribose 5-phosphate site.

Belongs to the PdxS/SNZ family. Homohexamer and homododecamer. In the presence of PdxT, forms a dodecamer of heterodimers.

The enzyme catalyses aldehydo-D-ribose 5-phosphate + D-glyceraldehyde 3-phosphate + L-glutamine = pyridoxal 5'-phosphate + L-glutamate + phosphate + 3 H2O + H(+). It functions in the pathway cofactor biosynthesis; pyridoxal 5'-phosphate biosynthesis. In terms of biological role, catalyzes the formation of pyridoxal 5'-phosphate from ribose 5-phosphate (RBP), glyceraldehyde 3-phosphate (G3P) and ammonia. The ammonia is provided by the PdxT subunit. Can also use ribulose 5-phosphate and dihydroxyacetone phosphate as substrates, resulting from enzyme-catalyzed isomerization of RBP and G3P, respectively. This chain is Pyridoxal 5'-phosphate synthase subunit PdxS, found in Geobacillus kaustophilus (strain HTA426).